The primary structure comprises 311 residues: Olfactory receptor-like protein OLF1 (311 aa).

Topologically, residues 1 to 24 are extracellular; that stretch reads MDGNYTLVTEFILLGFPTRPELQI. N-linked (GlcNAc...) asparagine glycosylation is present at asparagine 4. A helical transmembrane segment spans residues 25–48; that stretch reads VLFLVFLTLYGIILTGNIGLMMLI. Residues 49–56 are Cytoplasmic-facing; that stretch reads RTDPHLQT. The chain crosses the membrane as a helical span at residues 57 to 78; that stretch reads PMYFFLSNLSFADLCFSSAIVP. At 79-99 the chain is on the extracellular side; that stretch reads KMLVNFLSENKSISLYGCALQ. Residues 100–119 form a helical membrane-spanning segment; sequence FYFSCAFADTESFILAAMAY. Topologically, residues 120-138 are cytoplasmic; it reads DRYVAICNPLLYTVVMSRG. Residues 139 to 157 form a helical membrane-spanning segment; the sequence is ICVWLIVLSYIGGNMSSLV. Residues 158–195 lie on the Extracellular side of the membrane; it reads HTSFAFILKYCDKNVINHFFCDLPPLLKLSCTDTSVNE. A helical membrane pass occupies residues 196–218; sequence WLLSTYGSSVEIFCFIVIVISYY. Residues 219 to 235 are Cytoplasmic-facing; the sequence is FILRSVLRIRSSSGRKK. A helical membrane pass occupies residues 236-259; sequence TFSTCASHLTSVAIYQGTLLFIYS. Residues 260–271 are Extracellular-facing; the sequence is RPTYLYTPNTDK. A helical transmembrane segment spans residues 272–291; that stretch reads IISVFYTIIIPVLNPLIYSL. Residues 292 to 311 are Cytoplasmic-facing; sequence RNKDVKDAAKRAVRLKVDSS.

This sequence belongs to the G-protein coupled receptor 1 family.

Its subcellular location is the cell membrane. Its function is as follows. Putative odorant or sperm cell receptor. This chain is Olfactory receptor-like protein OLF1, found in Canis lupus familiaris (Dog).